The following is a 491-amino-acid chain: COP9 signalosome complex subunit 1 (491 aa).

The PCI domain maps to 269 to 431 (CLLLASFDHC…KILYARDVDQ (163 aa)). Positions 465-491 (HVKSPPREGSQGELTPANSQSRMSTNM) are disordered. Phosphoserine is present on residues S468 and S474. A compositionally biased stretch (polar residues) spans 476 to 491 (GELTPANSQSRMSTNM). Phosphothreonine is present on T479. Phosphoserine is present on S483.

It belongs to the CSN1 family. Component of the CSN complex, composed of COPS1/GPS1, COPS2, COPS3, COPS4, COPS5, COPS6, COPS7 (COPS7A or COPS7B), COPS8 and COPS9 isoform 1. In the complex, it probably interacts directly with COPS2, COPS3, COPS4 and COPS5. Interacts directly with inositol kinase ITPK1. Interacts with CAPN8. Interacts with USP48. Interacts with ASB4; this interaction negatively regulates GPS1. Widely expressed.

Its subcellular location is the cytoplasm. The protein resides in the nucleus. Functionally, essential component of the COP9 signalosome complex (CSN), a complex involved in various cellular and developmental processes. The CSN complex is an essential regulator of the ubiquitin (Ubl) conjugation pathway by mediating the deneddylation of the cullin subunits of SCF-type E3 ligase complexes, leading to decrease the Ubl ligase activity of SCF-type complexes such as SCF, CSA or DDB2. The complex is also involved in phosphorylation of p53/TP53, c-jun/JUN, IkappaBalpha/NFKBIA, ITPK1 and IRF8/ICSBP, possibly via its association with CK2 and PKD kinases. CSN-dependent phosphorylation of TP53 and JUN promotes and protects degradation by the Ubl system, respectively. Suppresses G-protein- and mitogen-activated protein kinase-mediated signal transduction. This chain is COP9 signalosome complex subunit 1 (GPS1), found in Homo sapiens (Human).